The following is a 155-amino-acid chain: Putative pre-16S rRNA nuclease (155 aa).

Belongs to the YqgF nuclease family.

It is found in the cytoplasm. Could be a nuclease involved in processing of the 5'-end of pre-16S rRNA. The sequence is that of Putative pre-16S rRNA nuclease from Corynebacterium jeikeium (strain K411).